An 855-amino-acid polypeptide reads, in one-letter code: DNA polymerase (855 aa).

Positions 107–332 (KPEMKPVFDA…LHNFFLPKIE (226 aa)) constitute a 3'-5' exonuclease domain. Residues 333-833 (KNEKLCSLYY…MDKEHPDHSK (501 aa)) form a polymerase region.

It belongs to the DNA polymerase type-A family. In terms of assembly, single-chain monomer with multiple functions.

It carries out the reaction DNA(n) + a 2'-deoxyribonucleoside 5'-triphosphate = DNA(n+1) + diphosphate. Functionally, replicates the viral genomic DNA. This polymerase possesses two enzymatic activities: DNA synthesis (polymerase) and an exonucleolytic activity that degrades single-stranded DNA in the 3'-5' direction for proofreading purpose. The DNA synthesis very likely occurs by strand displacement. This Escherichia phage T5 (Enterobacteria phage T5) protein is DNA polymerase.